The chain runs to 555 residues: MTKEHWSEVKAREVTEHCRKHADELPDEIVVASGASTSGRLHVGNARDVLTADAVARVLRERYHEDVRVVWISDDVDPLRRIPRDLDGRLSEDYLGVPYKAIPVGDEPYSDRWARNFVEELREFGAEVEWISSAELYTDNGFVKLVREVVNDYYGGGGRLASVLERFGLEDARVYMPVCEECGRIATTRVVDVDGWRIEYVCEGRHEIGDAVLEGCGHRGELDLRKPIEVNGFEIPPGKLGWKIEWPTRWVYLGVACEPFGKDHYVAGGSYEVGSAIAEEFFGFPAPVPVPYEWITLDGKAMSSSKGHYVTLSDWGEVCHREVLRYLVLRGKPLKHLDLDLRFGLLQAVDDYDELEKRYFAGEADERERRIYELSRVDEIPEECPPHVPFRFCAVVAQVVGIEDDVSEEEFERALEIFRRTGHLEAEPEGFGREWLRERLEKASRWVDRYAPEEARFRVREEPEPVELSDKEREFLEDLVRRLESETTKEDPETLQRTVFEAARTAGLRPADAFRVFYNVVVGKDRGPRAGTLIAAVGVDRISRLIRGCLEASED.

A 'HIGH' region motif is present at residues 37–45 (TSGRLHVGN). Positions 301–305 (AMSSS) match the 'KMSKS' region motif.

Belongs to the class-I aminoacyl-tRNA synthetase family.

Its subcellular location is the cytoplasm. It carries out the reaction tRNA(Lys) + L-lysine + ATP = L-lysyl-tRNA(Lys) + AMP + diphosphate. This chain is Lysine--tRNA ligase, found in Methanopyrus kandleri (strain AV19 / DSM 6324 / JCM 9639 / NBRC 100938).